The primary structure comprises 855 residues: Discoidin domain-containing receptor 2 (855 aa).

The signal sequence occupies residues 1-21 (MILIPRMLLVLFLLLPILSSA). At 22 to 399 (KAQVNPAICR…MLKVDDSNTR (378 aa)) the chain is on the extracellular side. In terms of domain architecture, F5/8 type C spans 30-185 (CRYPLGMSGG…VCMRVELYGC (156 aa)). 2 cysteine pairs are disulfide-bonded: Cys30–Cys185 and Cys73–Cys177. 5 N-linked (GlcNAc...) asparagine glycosylation sites follow: Asn121, Asn213, Asn261, Asn280, and Asn372. The chain crosses the membrane as a helical span at residues 400-421 (ILIGCLVAIIFILLAIIVIILW). The Cytoplasmic segment spans residues 422-855 (RQFWQKMLEK…HLLLLQQGDE (434 aa)). Residues 452–471 (SMFNNNRSSSPSEQGSNSTY) form a disordered region. Residue Tyr471 is modified to Phosphotyrosine; by SRC and autocatalysis. Positions 563-849 (LTFKEKLGEG…PSFQEIHLLL (287 aa)) constitute a Protein kinase domain. Residues 569 to 577 (LGEGQFGEV) and Lys608 contribute to the ATP site. Asp710 acts as the Proton acceptor in catalysis. Tyr736, Tyr740, and Tyr741 each carry phosphotyrosine; by SRC and autocatalysis.

Belongs to the protein kinase superfamily. Tyr protein kinase family. Insulin receptor subfamily. In terms of assembly, binds hydroxyproline-rich sequence motifs in fibrillar, glycosylated collagen, such as the GQOGVMGFO motif, where O stands for hydroxyproline. Interacts with SRC. Interacts (tyrosine phosphorylated) with SHC1. Post-translationally, N-glycosylated. Tyrosine phosphorylated in response to collagen binding. Phosphorylated by SRC; this is required for activation and subsequent autophosphorylation on additional tyrosine residues. As to expression, detected in osteocytes, osteoblastic cells in subchondral bone, bone lining cells, tibia and cartilage (at protein level). Detected at high levels in heart and lung, and at low levels in brain, placenta, liver, skeletal muscle, pancreas, and kidney.

The protein localises to the cell membrane. The enzyme catalyses L-tyrosyl-[protein] + ATP = O-phospho-L-tyrosyl-[protein] + ADP + H(+). With respect to regulation, present in an inactive state in the absence of collagen binding and phosphorylation by SRC. Tyrosine phosphorylation enhances the affinity for ATP and the catalytic activity. Its function is as follows. Tyrosine kinase involved in the regulation of tissues remodeling. It functions as a cell surface receptor for fibrillar collagen and regulates cell differentiation, remodeling of the extracellular matrix, cell migration and cell proliferation. Required for normal bone development. Regulates osteoblast differentiation and chondrocyte maturation via a signaling pathway that involves MAP kinases and leads to the activation of the transcription factor RUNX2. Regulates remodeling of the extracellular matrix by up-regulation of the collagenases MMP1, MMP2 and MMP13, and thereby facilitates cell migration and tumor cell invasion. Promotes fibroblast migration and proliferation, and thereby contributes to cutaneous wound healing. In Homo sapiens (Human), this protein is Discoidin domain-containing receptor 2 (DDR2).